A 561-amino-acid chain; its full sequence is Dihydroxy-acid dehydratase (561 aa).

Cys-51 contributes to the [2Fe-2S] cluster binding site. Residue Asp-83 coordinates Mg(2+). Cys-124 contacts [2Fe-2S] cluster. Positions 125 and 126 each coordinate Mg(2+). An N6-carboxylysine modification is found at Lys-126. Cys-196 lines the [2Fe-2S] cluster pocket. Mg(2+) is bound at residue Glu-447. Catalysis depends on Ser-473, which acts as the Proton acceptor.

The protein belongs to the IlvD/Edd family. In terms of assembly, homodimer. [2Fe-2S] cluster serves as cofactor. Requires Mg(2+) as cofactor.

It carries out the reaction (2R)-2,3-dihydroxy-3-methylbutanoate = 3-methyl-2-oxobutanoate + H2O. The enzyme catalyses (2R,3R)-2,3-dihydroxy-3-methylpentanoate = (S)-3-methyl-2-oxopentanoate + H2O. It participates in amino-acid biosynthesis; L-isoleucine biosynthesis; L-isoleucine from 2-oxobutanoate: step 3/4. The protein operates within amino-acid biosynthesis; L-valine biosynthesis; L-valine from pyruvate: step 3/4. Functionally, functions in the biosynthesis of branched-chain amino acids. Catalyzes the dehydration of (2R,3R)-2,3-dihydroxy-3-methylpentanoate (2,3-dihydroxy-3-methylvalerate) into 2-oxo-3-methylpentanoate (2-oxo-3-methylvalerate) and of (2R)-2,3-dihydroxy-3-methylbutanoate (2,3-dihydroxyisovalerate) into 2-oxo-3-methylbutanoate (2-oxoisovalerate), the penultimate precursor to L-isoleucine and L-valine, respectively. In Oceanobacillus iheyensis (strain DSM 14371 / CIP 107618 / JCM 11309 / KCTC 3954 / HTE831), this protein is Dihydroxy-acid dehydratase.